A 116-amino-acid polypeptide reads, in one-letter code: Ribosome-binding factor A (116 aa).

It belongs to the RbfA family. Monomer. Binds 30S ribosomal subunits, but not 50S ribosomal subunits or 70S ribosomes.

It localises to the cytoplasm. Its function is as follows. One of several proteins that assist in the late maturation steps of the functional core of the 30S ribosomal subunit. Associates with free 30S ribosomal subunits (but not with 30S subunits that are part of 70S ribosomes or polysomes). Required for efficient processing of 16S rRNA. May interact with the 5'-terminal helix region of 16S rRNA. This chain is Ribosome-binding factor A, found in Streptococcus pyogenes serotype M3 (strain SSI-1).